Consider the following 206-residue polypeptide: Small ribosomal subunit protein uS7 (206 aa).

It belongs to the universal ribosomal protein uS7 family. Component of the small ribosomal subunit.

The protein localises to the cytoplasm. Component of the small ribosomal subunit. The ribosome is a large ribonucleoprotein complex responsible for the synthesis of proteins in the cell. The chain is Small ribosomal subunit protein uS7 from Entamoeba histolytica (strain ATCC 30459 / HM-1:IMSS / ABRM).